A 568-amino-acid chain; its full sequence is PWWP domain-containing protein2 (568 aa).

Residues 1–19 show a composition bias toward basic and acidic residues; it reads MTEIKDSSVKDENPGKQEE. Disordered stretches follow at residues 1–126, 213–340, and 465–568; these read MTEI…YKPG, QSTP…DVAK, and IASL…TGQK. A compositionally biased stretch (polar residues) spans 29–46; sequence MSTATNNSKNIETTSSNG. 2 stretches are compositionally biased toward basic and acidic residues: residues 48–88 and 100–122; these read EDIK…KTIE and KSQK…ERVN. Residues 125 to 189 enclose the PWWP domain; that stretch reads PGMRVLTKMS…SDSLTPLTSE (65 aa). Over residues 214–228 the composition is skewed to low complexity; it reads STPDLDSLSVPSSES. Acidic residues predominate over residues 229–249; sequence EVSEEESDQEMSEPSPIEEDY. The span at 255–266 shows a compositional bias: basic residues; sequence RRITRKGTKKKT. Positions 281–292 are enriched in polar residues; that stretch reads LNASSNVSSNPA. A compositionally biased stretch (acidic residues) spans 325–336; it reads KEEEEGSVANEE. 2 stretches are compositionally biased toward basic and acidic residues: residues 489–500 and 514–541; these read KQNEDNEDKVKA and DASK…KDFA.

The polypeptide is PWWP domain-containing protein2 (pdp2) (Schizosaccharomyces pombe (strain 972 / ATCC 24843) (Fission yeast)).